The primary structure comprises 548 residues: Non-structural protein NS1 (548 aa).

This sequence belongs to the orbivirus non-structural protein NS1 family.

The protein is Non-structural protein NS1 (Segment-5) of Camelus dromedarius (Dromedary).